A 694-amino-acid polypeptide reads, in one-letter code: Polyribonucleotide nucleotidyltransferase (694 aa).

Residues Asp486 and Asp492 each contribute to the Mg(2+) site. Residues 553-612 (PRIETMQIKPTKIASVIGPGGKQIRQIIEETGVQIDVNDLGVVSISASSASAINKAKEII) form the KH domain. An S1 motif domain is found at 622 to 690 (GKTYRGRVTS…EKGQLKLSHK (69 aa)).

Belongs to the polyribonucleotide nucleotidyltransferase family. Mg(2+) is required as a cofactor.

It localises to the cytoplasm. It catalyses the reaction RNA(n+1) + phosphate = RNA(n) + a ribonucleoside 5'-diphosphate. Involved in mRNA degradation. Catalyzes the phosphorolysis of single-stranded polyribonucleotides processively in the 3'- to 5'-direction. In Chlamydia pneumoniae (Chlamydophila pneumoniae), this protein is Polyribonucleotide nucleotidyltransferase.